Here is a 288-residue protein sequence, read N- to C-terminus: Fatty acid-binding protein TM_1468 (288 aa).

The region spanning 3-283 is the DegV domain; the sequence is VKILVDSTAD…PGTVGFGIEV (281 aa). T63 and S96 together coordinate hexadecanoate.

Monomer.

Its function is as follows. Binds long-chain fatty acids, such as palmitate, and may play a role in lipid transport or fatty acid metabolism. This chain is Fatty acid-binding protein TM_1468, found in Thermotoga maritima (strain ATCC 43589 / DSM 3109 / JCM 10099 / NBRC 100826 / MSB8).